We begin with the raw amino-acid sequence, 131 residues long: Small ribosomal subunit protein bS6m (131 aa).

This sequence belongs to the bacterial ribosomal protein bS6 family. As to quaternary structure, component of the mitochondrial small ribosomal subunit (mt-SSU). Mature yeast 74S mitochondrial ribosomes consist of a small (37S) and a large (54S) subunit. The 37S small subunit contains a 15S ribosomal RNA (15S mt-rRNA) and 34 different proteins. The 54S large subunit contains a 21S rRNA (21S mt-rRNA) and 46 different proteins.

Its subcellular location is the mitochondrion. Its function is as follows. Component of the mitochondrial ribosome (mitoribosome), a dedicated translation machinery responsible for the synthesis of mitochondrial genome-encoded proteins, including at least some of the essential transmembrane subunits of the mitochondrial respiratory chain. The mitoribosomes are attached to the mitochondrial inner membrane and translation products are cotranslationally integrated into the membrane. This Saccharomyces cerevisiae (strain ATCC 204508 / S288c) (Baker's yeast) protein is Small ribosomal subunit protein bS6m (MRP17).